A 540-amino-acid chain; its full sequence is Sesquiterpene synthase 15b (540 aa).

Asp-292, Asp-296, and Glu-445 together coordinate Mg(2+). The short motif at 292–296 (DDIYD) is the DDXXD motif element.

The protein belongs to the terpene synthase family. Tpsa subfamily. Requires Mg(2+) as cofactor. It depends on Mn(2+) as a cofactor.

The catalysed reaction is (2E,6E)-farnesyl diphosphate = germacrene A + diphosphate. Its pathway is secondary metabolite biosynthesis; terpenoid biosynthesis. Sesquiterpene synthase involved in the biosynthesis of volatile compounds. Mediates the conversion of (2E,6E)-farnesyl diphosphate (FPP) into germacrene A. This Solanum habrochaites (Wild tomato) protein is Sesquiterpene synthase 15b.